Here is a 314-residue protein sequence, read N- to C-terminus: MAAAAPGALGALRTGRVRLVAACCARLGPAAWARGTAPRRGYSSEVKTEDELRVRHLEEENRGIVVLGINRAYGKNALSKNLLKMLSKAVDALKSDKKVRTIIIRSEVPGIFCAGADLKERAKMHSSEVGPFVSKIRSVINDIANLPVPTIAAIDGLALGGGLELALACDIRVAASSAKMGLVETKLAIIPGGGGTQRLPRAIGMSLAKELIFSARVLDGQEAKAVGLISHVLEQNQEGDAAYRKALDLAREFLPQGPVAMRVAKLAINQGMEVDLVTGLAIEEACYAQTISTKDRLEGLLAFKEKRPPRYKGE.

The N-terminal 42 residues, 1–42 (MAAAAPGALGALRTGRVRLVAACCARLGPAAWARGTAPRRGY), are a transit peptide targeting the mitochondrion. Lys75 carries the N6-acetyllysine; alternate modification. N6-succinyllysine; alternate is present on Lys75. The tract at residues 80-94 (KNLLKMLSKAVDALK) is RNA-binding. Lys84 bears the N6-succinyllysine mark. An N6-acetyllysine; alternate mark is found at Lys88 and Lys119. 2 positions are modified to N6-succinyllysine; alternate: Lys88 and Lys119. N6-succinyllysine is present on residues Lys123 and Lys135. N6-acetyllysine; alternate is present on residues Lys179 and Lys186. Residues Lys179 and Lys186 each carry the N6-succinyllysine; alternate modification. Position 304 is an N6-succinyllysine (Lys304).

It belongs to the enoyl-CoA hydratase/isomerase family. In terms of assembly, homohexamer. As to expression, detected in heart, brain, liver, spleen, skeletal muscle and kidney. Expressed in brain, kidney, liver and spleen tissue (at protein level).

It is found in the mitochondrion. It carries out the reaction (3S)-3-hydroxy-3-methylglutaryl-CoA = 3-methyl-(2E)-glutaconyl-CoA + H2O. The enzyme catalyses (3S)-citramalyl-CoA = itaconyl-CoA + H2O. It catalyses the reaction 3-hydroxyisovaleryl-CoA = 3-methylbut-2-enoyl-CoA + H2O. The catalysed reaction is (S)-3-hydroxyglutaryl-CoA = (2E)-glutaconyl-CoA + H2O. It functions in the pathway amino-acid degradation; L-leucine degradation; (S)-3-hydroxy-3-methylglutaryl-CoA from 3-isovaleryl-CoA: step 3/3. Its function is as follows. Catalyzes the fifth step in the leucine degradation pathway, the reversible hydration of 3-methylglutaconyl-CoA (3-MG-CoA) to 3-hydroxy-3-methylglutaryl-CoA (HMG-CoA). Can catalyze the reverse reaction but at a much lower rate in vitro. HMG-CoA is then quickly degraded by another enzyme (such as HMG-CoA lyase) to give acetyl-CoA and acetoacetate. Uses other substrates such as (2E)-glutaconyl-CoA efficiently in vitro, and to a lesser extent 3-methylcrotonyl-CoA (3-methyl-(2E)-butenoyl-CoA), crotonyl-CoA ((2E)-butenoyl-CoA) and 3-hydroxybutanoyl-CoA (the missing carboxylate reduces affinity to the active site). Originally it was identified as an RNA-binding protein as it binds to AU-rich elements (AREs) in vitro. AREs direct rapid RNA degradation and mRNA deadenylation. Might have itaconyl-CoA hydratase activity, converting itaconyl-CoA into citramalyl-CoA in the C5-dicarboxylate catabolism pathway. The C5-dicarboxylate catabolism pathway is required to detoxify itaconate, an antimicrobial metabolite and immunomodulator produced by macrophages during certain infections, that can act as a vitamin B12-poisoning metabolite. The polypeptide is Methylglutaconyl-CoA hydratase, mitochondrial (Auh) (Mus musculus (Mouse)).